The following is a 440-amino-acid chain: Tryptophan synthase beta chain (440 aa).

At Lys110 the chain carries N6-(pyridoxal phosphate)lysine.

The protein belongs to the TrpB family. Tetramer of two alpha and two beta chains. It depends on pyridoxal 5'-phosphate as a cofactor.

It catalyses the reaction (1S,2R)-1-C-(indol-3-yl)glycerol 3-phosphate + L-serine = D-glyceraldehyde 3-phosphate + L-tryptophan + H2O. The protein operates within amino-acid biosynthesis; L-tryptophan biosynthesis; L-tryptophan from chorismate: step 5/5. The beta subunit is responsible for the synthesis of L-tryptophan from indole and L-serine. The protein is Tryptophan synthase beta chain of Thermococcus gammatolerans (strain DSM 15229 / JCM 11827 / EJ3).